We begin with the raw amino-acid sequence, 979 residues long: Putative transcription initiation factor TFIID 111 kDa subunit (979 aa).

The residue at position 244 (S244) is a Phosphoserine.

TFIID is composed of TATA binding protein (TBP) and a number of TBP-associated factors (TAFs).

The protein localises to the nucleus. Its function is as follows. TAFs are components of the transcription factor IID (TFIID) complex that are essential for mediating regulation of RNA polymerase transcription. This is Putative transcription initiation factor TFIID 111 kDa subunit from Schizosaccharomyces pombe (strain 972 / ATCC 24843) (Fission yeast).